Consider the following 385-residue polypeptide: Chaperone protein DnaJ (385 aa).

One can recognise a J domain in the interval 5 to 70; the sequence is DYYEVLGVAK…QKRAAYDRFG (66 aa). Residues 141–219 form a CR-type zinc finger; the sequence is GKTETIRIPT…CSGAGRVNRE (79 aa). The Zn(2+) site is built by Cys-154, Cys-157, Cys-171, Cys-174, Cys-193, Cys-196, Cys-207, and Cys-210. CXXCXGXG motif repeat units lie at residues 154–161, 171–178, 193–200, and 207–214; these read CETCSGTG, CSTCGGYG, CPNCHGRG, and CTACSGAG.

The protein belongs to the DnaJ family. In terms of assembly, homodimer. Zn(2+) is required as a cofactor.

Its subcellular location is the cytoplasm. Its function is as follows. Participates actively in the response to hyperosmotic and heat shock by preventing the aggregation of stress-denatured proteins and by disaggregating proteins, also in an autonomous, DnaK-independent fashion. Unfolded proteins bind initially to DnaJ; upon interaction with the DnaJ-bound protein, DnaK hydrolyzes its bound ATP, resulting in the formation of a stable complex. GrpE releases ADP from DnaK; ATP binding to DnaK triggers the release of the substrate protein, thus completing the reaction cycle. Several rounds of ATP-dependent interactions between DnaJ, DnaK and GrpE are required for fully efficient folding. Also involved, together with DnaK and GrpE, in the DNA replication of plasmids through activation of initiation proteins. This Methylorubrum extorquens (strain PA1) (Methylobacterium extorquens) protein is Chaperone protein DnaJ.